We begin with the raw amino-acid sequence, 359 residues long: Methylthioribose-1-phosphate isomerase (359 aa).

Residues 52–54 (RGA), Arg90, and Gln200 contribute to the substrate site. The active-site Proton donor is Asp241. 251 to 252 (NK) is a binding site for substrate.

The protein belongs to the eIF-2B alpha/beta/delta subunits family. MtnA subfamily.

It catalyses the reaction 5-(methylsulfanyl)-alpha-D-ribose 1-phosphate = 5-(methylsulfanyl)-D-ribulose 1-phosphate. It functions in the pathway amino-acid biosynthesis; L-methionine biosynthesis via salvage pathway; L-methionine from S-methyl-5-thio-alpha-D-ribose 1-phosphate: step 1/6. Functionally, catalyzes the interconversion of methylthioribose-1-phosphate (MTR-1-P) into methylthioribulose-1-phosphate (MTRu-1-P). The sequence is that of Methylthioribose-1-phosphate isomerase from Sulfurimonas denitrificans (strain ATCC 33889 / DSM 1251) (Thiomicrospira denitrificans (strain ATCC 33889 / DSM 1251)).